A 241-amino-acid polypeptide reads, in one-letter code: Attacin-C (241 aa).

Residues 1 to 21 (MSKIVLLIVVIVGVLGSLAVA) form the signal peptide. A propeptide spanning residues 22-23 (LP) is cleaved from the precursor. Gln24 is modified (pyrrolidone carboxylic acid). Residue Thr39 is glycosylated (O-linked (GalNAc...) threonine). A Phosphoserine modification is found at Ser127.

This sequence belongs to the attacin/sarcotoxin-2 family. In terms of tissue distribution, hemolymph (at protein level).

It localises to the secreted. Its function is as follows. Has antimicrobial activity in synergy with other peptides. Strongest activity observed against E.cloacae. This Drosophila melanogaster (Fruit fly) protein is Attacin-C.